Reading from the N-terminus, the 347-residue chain is Selenide, water dikinase (347 aa).

Cysteine 17 is a catalytic residue. ATP-binding positions include lysine 20 and 48–50; that span reads TRD. Aspartate 51 contacts Mg(2+). Residues aspartate 68, aspartate 91, and 139–141 contribute to the ATP site; that span reads GHS. Aspartate 91 provides a ligand contact to Mg(2+). Aspartate 227 serves as a coordination point for Mg(2+).

Belongs to the selenophosphate synthase 1 family. Class I subfamily. Homodimer. It depends on Mg(2+) as a cofactor.

The enzyme catalyses hydrogenselenide + ATP + H2O = selenophosphate + AMP + phosphate + 2 H(+). Synthesizes selenophosphate from selenide and ATP. The sequence is that of Selenide, water dikinase from Shigella flexneri serotype 5b (strain 8401).